The primary structure comprises 415 residues: Serine hydroxymethyltransferase (415 aa).

Residues Leu121 and 125-127 (GHL) each bind (6S)-5,6,7,8-tetrahydrofolate. The residue at position 229 (Lys229) is an N6-(pyridoxal phosphate)lysine. 352–354 (SPF) is a (6S)-5,6,7,8-tetrahydrofolate binding site.

It belongs to the SHMT family. In terms of assembly, homodimer. It depends on pyridoxal 5'-phosphate as a cofactor.

The protein resides in the cytoplasm. The enzyme catalyses (6R)-5,10-methylene-5,6,7,8-tetrahydrofolate + glycine + H2O = (6S)-5,6,7,8-tetrahydrofolate + L-serine. Its pathway is one-carbon metabolism; tetrahydrofolate interconversion. The protein operates within amino-acid biosynthesis; glycine biosynthesis; glycine from L-serine: step 1/1. In terms of biological role, catalyzes the reversible interconversion of serine and glycine with tetrahydrofolate (THF) serving as the one-carbon carrier. This reaction serves as the major source of one-carbon groups required for the biosynthesis of purines, thymidylate, methionine, and other important biomolecules. Also exhibits THF-independent aldolase activity toward beta-hydroxyamino acids, producing glycine and aldehydes, via a retro-aldol mechanism. In Methylobacillus flagellatus (strain ATCC 51484 / DSM 6875 / VKM B-1610 / KT), this protein is Serine hydroxymethyltransferase.